A 133-amino-acid chain; its full sequence is DNA-directed RNA polymerase subunit omega (133 aa).

This sequence belongs to the RNA polymerase subunit omega family. As to quaternary structure, the RNAP catalytic core consists of 2 alpha, 1 beta, 1 beta' and 1 omega subunit. When a sigma factor is associated with the core the holoenzyme is formed, which can initiate transcription.

It carries out the reaction RNA(n) + a ribonucleoside 5'-triphosphate = RNA(n+1) + diphosphate. Its function is as follows. Promotes RNA polymerase assembly. Latches the N- and C-terminal regions of the beta' subunit thereby facilitating its interaction with the beta and alpha subunits. This chain is DNA-directed RNA polymerase subunit omega, found in Brucella abortus (strain S19).